We begin with the raw amino-acid sequence, 143 residues long: MGKPRGLRTARKHRSHRRDQRWHDKDYKKAHLGTRWKANPFGGASHAKGIVLEKVGVEAKQPNSAIRKCVRVQLIKNGKKITAFVPRDGCLNYIEENDEVLVAGFGRKGHAVGDIPGVRFKVVKVANVSLLALYKEKKERPRS.

Positions 1–20 are enriched in basic residues; it reads MGKPRGLRTARKHRSHRRDQ. A disordered region spans residues 1-26; that stretch reads MGKPRGLRTARKHRSHRRDQRWHDKD. A Hydroxyproline modification is found at Pro-62.

This sequence belongs to the universal ribosomal protein uS12 family. Component of the 40S small ribosomal subunit.

The protein localises to the cytoplasm. It localises to the cytosol. Its subcellular location is the rough endoplasmic reticulum. The protein is Small ribosomal subunit protein uS12 (RpS23) of Dermacentor variabilis (American dog tick).